Here is a 162-residue protein sequence, read N- to C-terminus: Scytalone dehydratase-like protein claB (162 aa).

Y48 is a substrate binding site. Catalysis depends on residues H83 and H108.

It belongs to the scytalone dehydratase family.

It functions in the pathway pigment biosynthesis. In terms of biological role, scytalone dehydratase-like protein; part of the gene cluster that mediates the biosynthesis of the bianthraquinone cladofulvin, a conidial pigment not required for virulence but that plays a role in fitness and resistance to environmental stresses including UV light and low-temperature stress. The pathway begins with the synthesis of atrochrysone thioester by the polyketide synthase (PKS) claG. The atrochrysone carboxyl ACP thioesterase claF then breaks the thioester bond and releases the atrochrysone carboxylic acid from claG. This compound is decarboxylated by claH to yield emodin, which is further converted to chrysophanol hydroquinone by the reductase claC and the dehydratase claB. The cytochrome P450 monooxygenase claM then catalyzes the dimerization of nataloe-emodin to cladofulvin. The chain is Scytalone dehydratase-like protein claB from Passalora fulva (Tomato leaf mold).